Consider the following 447-residue polypeptide: Ribosomal protein uS12 methylthiotransferase RimO (447 aa).

An MTTase N-terminal domain is found at 4-114 (PKVGFVSLGC…VMEAVHEYVP (111 aa)). Residues cysteine 13, cysteine 49, cysteine 78, cysteine 147, cysteine 151, and cysteine 154 each contribute to the [4Fe-4S] cluster site. Residues 133-370 (LTPKHYAYLK…MQVQQEISAA (238 aa)) enclose the Radical SAM core domain. Positions 373–443 (QKRIGQTMTV…EYDLFAKLIQ (71 aa)) constitute a TRAM domain.

It belongs to the methylthiotransferase family. RimO subfamily. [4Fe-4S] cluster serves as cofactor.

It localises to the cytoplasm. It carries out the reaction L-aspartate(89)-[ribosomal protein uS12]-hydrogen + (sulfur carrier)-SH + AH2 + 2 S-adenosyl-L-methionine = 3-methylsulfanyl-L-aspartate(89)-[ribosomal protein uS12]-hydrogen + (sulfur carrier)-H + 5'-deoxyadenosine + L-methionine + A + S-adenosyl-L-homocysteine + 2 H(+). Functionally, catalyzes the methylthiolation of an aspartic acid residue of ribosomal protein uS12. The protein is Ribosomal protein uS12 methylthiotransferase RimO of Acinetobacter baylyi (strain ATCC 33305 / BD413 / ADP1).